The following is a 121-amino-acid chain: Small ribosomal subunit protein uS13 (121 aa).

The tract at residues 91–121 is disordered; that stretch reads HRMSLPVRGQRTRTNARTRRGSRKTVAGRKK. A compositionally biased stretch (basic residues) spans 100-121; sequence QRTRTNARTRRGSRKTVAGRKK.

Belongs to the universal ribosomal protein uS13 family. In terms of assembly, part of the 30S ribosomal subunit. Forms a loose heterodimer with protein S19. Forms two bridges to the 50S subunit in the 70S ribosome.

Located at the top of the head of the 30S subunit, it contacts several helices of the 16S rRNA. In the 70S ribosome it contacts the 23S rRNA (bridge B1a) and protein L5 of the 50S subunit (bridge B1b), connecting the 2 subunits; these bridges are implicated in subunit movement. Contacts the tRNAs in the A and P-sites. This Prochlorococcus marinus (strain MIT 9515) protein is Small ribosomal subunit protein uS13.